Here is a 193-residue protein sequence, read N- to C-terminus: dCTP deaminase (193 aa).

DCTP contacts are provided by residues 110–115 (RSSLAR), aspartate 128, 136–138 (VLE), tyrosine 171, lysine 178, and glutamine 182. Glutamate 138 acts as the Proton donor/acceptor in catalysis. Positions 170 to 181 (PYNRRQDAKYRD) are enriched in basic and acidic residues. Residues 170 to 193 (PYNRRQDAKYRDQQGAVASRIDKD) are disordered.

It belongs to the dCTP deaminase family. As to quaternary structure, homotrimer.

The enzyme catalyses dCTP + H2O + H(+) = dUTP + NH4(+). It participates in pyrimidine metabolism; dUMP biosynthesis; dUMP from dCTP (dUTP route): step 1/2. Catalyzes the deamination of dCTP to dUTP. This Enterobacter sp. (strain 638) protein is dCTP deaminase.